The following is a 302-amino-acid chain: tRNA-cytidine(32) 2-sulfurtransferase (302 aa).

The short motif at 45-50 (SGGKDS) is the PP-loop motif element. [4Fe-4S] cluster contacts are provided by C120, C123, and C211.

It belongs to the TtcA family. Homodimer. It depends on Mg(2+) as a cofactor. Requires [4Fe-4S] cluster as cofactor.

Its subcellular location is the cytoplasm. The enzyme catalyses cytidine(32) in tRNA + S-sulfanyl-L-cysteinyl-[cysteine desulfurase] + AH2 + ATP = 2-thiocytidine(32) in tRNA + L-cysteinyl-[cysteine desulfurase] + A + AMP + diphosphate + H(+). It functions in the pathway tRNA modification. In terms of biological role, catalyzes the ATP-dependent 2-thiolation of cytidine in position 32 of tRNA, to form 2-thiocytidine (s(2)C32). The sulfur atoms are provided by the cysteine/cysteine desulfurase (IscS) system. In Aeromonas hydrophila subsp. hydrophila (strain ATCC 7966 / DSM 30187 / BCRC 13018 / CCUG 14551 / JCM 1027 / KCTC 2358 / NCIMB 9240 / NCTC 8049), this protein is tRNA-cytidine(32) 2-sulfurtransferase.